We begin with the raw amino-acid sequence, 202 residues long: Small ribosomal subunit protein uS4 (202 aa).

Positions 22-43 are disordered; sequence TRKSARRAYPPGQHGQNRRKRS. Residues 90 to 152 form the S4 RNA-binding domain; that stretch reads MRLDNTVFRL…EKSKEMVKTN (63 aa).

The protein belongs to the universal ribosomal protein uS4 family. As to quaternary structure, part of the 30S ribosomal subunit. Contacts protein S5. The interaction surface between S4 and S5 is involved in control of translational fidelity.

Its function is as follows. One of the primary rRNA binding proteins, it binds directly to 16S rRNA where it nucleates assembly of the body of the 30S subunit. In terms of biological role, with S5 and S12 plays an important role in translational accuracy. The protein is Small ribosomal subunit protein uS4 of Trichodesmium erythraeum (strain IMS101).